A 587-amino-acid polypeptide reads, in one-letter code: 5-aminolevulinate synthase, erythroid-specific, mitochondrial (587 aa).

The N-terminal 49 residues, 1–49 (MVAAAMLLRSCPVLSKGPTGLLGKVAKTYQFLFGIGRCPILATQGPTCS), are a transit peptide targeting the mitochondrion. Arg163 is a succinyl-CoA binding site. Positions 258 and 259 each coordinate pyridoxal 5'-phosphate. Succinyl-CoA is bound by residues Ser280 and Lys299. Residues Ser332, His360, and Thr388 each contribute to the pyridoxal 5'-phosphate site. Lys391 is a catalytic residue. An N6-(pyridoxal phosphate)lysine modification is found at Lys391. The pyridoxal 5'-phosphate site is built by Thr420 and Thr421. Residue Thr508 participates in succinyl-CoA binding.

This sequence belongs to the class-II pyridoxal-phosphate-dependent aminotransferase family. As to quaternary structure, homodimer. Interacts with SUCLA2. It depends on pyridoxal 5'-phosphate as a cofactor. In terms of tissue distribution, erythroid-specific.

It localises to the mitochondrion inner membrane. The enzyme catalyses succinyl-CoA + glycine + H(+) = 5-aminolevulinate + CO2 + CoA. It participates in porphyrin-containing compound metabolism; protoporphyrin-IX biosynthesis; 5-aminolevulinate from glycine: step 1/1. In terms of biological role, catalyzes the pyridoxal 5'-phosphate (PLP)-dependent condensation of succinyl-CoA and glycine to form aminolevulinic acid (ALA), with CoA and CO2 as by-products. Contributes significantly to heme formation during erythropoiesis. In Rattus norvegicus (Rat), this protein is 5-aminolevulinate synthase, erythroid-specific, mitochondrial (Alas2).